Reading from the N-terminus, the 826-residue chain is Beta-galactosidase 7 (826 aa).

A signal peptide spans 1-25 (MKMKHFTRLLSLFFILITSLSLAKS). N-linked (GlcNAc...) asparagine glycosylation occurs at asparagine 154. The Proton donor role is filled by glutamate 184. Glutamate 253 (nucleophile) is an active-site residue. N-linked (GlcNAc...) asparagine glycosylation is found at asparagine 254, asparagine 351, asparagine 380, asparagine 491, asparagine 665, asparagine 706, asparagine 797, and asparagine 801. The SUEL-type lectin domain occupies 740-826 (AHEHNKVELS…PKKLAVELEC (87 aa)).

It belongs to the glycosyl hydrolase 35 family. Expressed in flowers.

The protein localises to the secreted. It is found in the extracellular space. Its subcellular location is the apoplast. The enzyme catalyses Hydrolysis of terminal non-reducing beta-D-galactose residues in beta-D-galactosides.. This is Beta-galactosidase 7 (BGAL7) from Arabidopsis thaliana (Mouse-ear cress).